A 20-amino-acid polypeptide reads, in one-letter code: Dahlein-5.1 (20 aa).

As to expression, expressed by the skin dorsal glands.

It is found in the secreted. Functionally, has no antimicrobial activity. Strongly inhibits the formation of NO by neuronal nitric oxide synthase at micromolar concentrations. Acts by a non-competitive mechanism, probably by binding to calcium/calmodulin and as a consequence blocking calmodulin attachment to nNOS. The protein is Dahlein-5.1 of Ranoidea dahlii (Dahl's aquatic frog).